We begin with the raw amino-acid sequence, 213 residues long: Uridine kinase (213 aa).

13–20 (GASASGKS) contacts ATP.

It belongs to the uridine kinase family.

The protein resides in the cytoplasm. The enzyme catalyses uridine + ATP = UMP + ADP + H(+). It carries out the reaction cytidine + ATP = CMP + ADP + H(+). It functions in the pathway pyrimidine metabolism; CTP biosynthesis via salvage pathway; CTP from cytidine: step 1/3. It participates in pyrimidine metabolism; UMP biosynthesis via salvage pathway; UMP from uridine: step 1/1. The sequence is that of Uridine kinase from Haemophilus influenzae (strain PittEE).